The chain runs to 804 residues: Type 2 DNA topoisomerase 6 subunit B (804 aa).

ATP contacts are provided by residues Asn-58, Asp-89, 110–111 (SR), 120–127 (GQQGIGIS), and Lys-629.

This sequence belongs to the TOP6B family. Homodimer. Heterotetramer of two Top6A and two Top6B chains.

The enzyme catalyses ATP-dependent breakage, passage and rejoining of double-stranded DNA.. Its function is as follows. Relaxes both positive and negative superturns and exhibits a strong decatenase activity. The sequence is that of Type 2 DNA topoisomerase 6 subunit B from Halobacterium salinarum (strain ATCC 29341 / DSM 671 / R1).